Here is a 553-residue protein sequence, read N- to C-terminus: 5'-nucleotidase (553 aa).

An N-terminal signal peptide occupies residues 1–21 (MKQRLIVKTALSAAILATLAG). C22 carries N-palmitoyl cysteine lipidation. C22 carries S-diacylglycerol cysteine lipidation. 7 residues coordinate a divalent metal cation: D45, H47, D88, N120, H221, H256, and Q258. Substrate is bound by residues F432 and 501-507 (YNAAGGD).

It belongs to the 5'-nucleotidase family. It depends on chloride as a cofactor. The cofactor is Mg(2+).

It localises to the cell outer membrane. It catalyses the reaction a ribonucleoside 5'-phosphate + H2O = a ribonucleoside + phosphate. Degradation of extracellular 5'-nucleotides for nutritional needs. The sequence is that of 5'-nucleotidase (nutA) from Vibrio vulnificus (strain CMCP6).